Reading from the N-terminus, the 141-residue chain is Hemoglobin D subunit alpha (141 aa).

Residues 1–141 enclose the Globin domain; that stretch reads MLTEDDKQLI…VSAVLAEKYR (141 aa). An O2-binding site is contributed by His-58. A heme b-binding site is contributed by His-87.

Belongs to the globin family. Tetramer of two alpha chains and two beta chains. In terms of tissue distribution, red blood cells.

Functionally, involved in oxygen transport from the lung to the various peripheral tissues. The polypeptide is Hemoglobin D subunit alpha (Aldabrachelys gigantea (Aldabra giant tortoise)).